The primary structure comprises 204 residues: Ubiquitin-conjugating enzyme E2 S (204 aa).

The UBC core domain occupies 14–160 (QIIKQVAREI…AKMFTEIHAK (147 aa)). The Glycyl thioester intermediate role is filled by Cys98. Residues 165 to 176 (SSNNISEGQQES) show a composition bias toward polar residues. Residues 165 to 204 (SSNNISEGQQESLPGKKRVAVNEKMCDKKKKDKKRALKRL) are disordered. A compositionally biased stretch (basic residues) spans 191–204 (DKKKKDKKRALKRL).

The protein belongs to the ubiquitin-conjugating enzyme family.

The catalysed reaction is S-ubiquitinyl-[E1 ubiquitin-activating enzyme]-L-cysteine + [E2 ubiquitin-conjugating enzyme]-L-cysteine = [E1 ubiquitin-activating enzyme]-L-cysteine + S-ubiquitinyl-[E2 ubiquitin-conjugating enzyme]-L-cysteine.. Its pathway is protein modification; protein ubiquitination. Functionally, catalyzes the covalent attachment of ubiquitin to other proteins. Acts as an essential factor of the anaphase promoting complex/cyclosome (APC/C), a cell cycle-regulated ubiquitin ligase that controls progression through mitosis. Acts by specifically elongating polyubiquitin chains initiated by the E2 enzyme UBCH10 on APC/C substrates, enhancing the degradation of APC/C substrates by the proteasome and promoting mitotic exit. The polypeptide is Ubiquitin-conjugating enzyme E2 S (Nematostella vectensis (Starlet sea anemone)).